A 122-amino-acid chain; its full sequence is Ferredoxin (122 aa).

Residues 1-33 form a disordered region; that stretch reads MSHDRRLTVGSLLPNQPRPVAVPKAPSVVQPSK. The targeting peptide stretch occupies residues 8–14; sequence TVGSLLP. The 83-residue stretch at 40 to 122 folds into the 2Fe-2S ferredoxin-type domain; the sequence is AIIRLEQNGR…FRLACQANME (83 aa). [2Fe-2S] cluster contacts are provided by Cys75, Cys80, Cys83, and Cys117.

This sequence belongs to the 2Fe2S plant-type ferredoxin family. The cofactor is [2Fe-2S] cluster.

The protein localises to the encapsulin nanocompartment. Cargo protein of a type 1 encapsulin nanocompartment. An iron-binding protein probably involved in iron mineralization in the encapsulin nanocompartment. 2 different cargo proteins have been identified (IMEF and Fer); when both are expressed in E.coli with the shell protein only IMEF is detected within the nanocompartment. E.coli expressing all 3 genes stores the largest amount of iron and is protected from Fe/H2O2-induced oxidative stress. In Bacillus thermotolerans (Quasibacillus thermotolerans), this protein is Ferredoxin.